The sequence spans 129 residues: Small ribosomal subunit protein uS11 (129 aa).

This sequence belongs to the universal ribosomal protein uS11 family. In terms of assembly, part of the 30S ribosomal subunit. Interacts with proteins S7 and S18. Binds to IF-3.

Located on the platform of the 30S subunit, it bridges several disparate RNA helices of the 16S rRNA. Forms part of the Shine-Dalgarno cleft in the 70S ribosome. In Pseudomonas fluorescens (strain SBW25), this protein is Small ribosomal subunit protein uS11.